Consider the following 200-residue polypeptide: Pyridoxal 5'-phosphate synthase subunit PdxT (200 aa).

Residue 52 to 54 coordinates L-glutamine; that stretch reads GES. Catalysis depends on Cys84, which acts as the Nucleophile. L-glutamine is bound by residues Arg115 and 143–144; that span reads IR. Residues His179 and Glu181 each act as charge relay system in the active site.

It belongs to the glutaminase PdxT/SNO family. In the presence of PdxS, forms a dodecamer of heterodimers. Only shows activity in the heterodimer.

The catalysed reaction is aldehydo-D-ribose 5-phosphate + D-glyceraldehyde 3-phosphate + L-glutamine = pyridoxal 5'-phosphate + L-glutamate + phosphate + 3 H2O + H(+). It carries out the reaction L-glutamine + H2O = L-glutamate + NH4(+). It participates in cofactor biosynthesis; pyridoxal 5'-phosphate biosynthesis. Its function is as follows. Catalyzes the hydrolysis of glutamine to glutamate and ammonia as part of the biosynthesis of pyridoxal 5'-phosphate. The resulting ammonia molecule is channeled to the active site of PdxS. The protein is Pyridoxal 5'-phosphate synthase subunit PdxT of Methanosarcina barkeri (strain Fusaro / DSM 804).